Here is a 562-residue protein sequence, read N- to C-terminus: Delta-1-pyrroline-5-carboxylate dehydrogenase, mitochondrial (562 aa).

Residues 1–23 (MLPLPSLRRSLLSHAWRGAGLRW) constitute a mitochondrion transit peptide. Lysine 30 carries the post-translational modification N6-succinyllysine. At serine 43 the chain carries Phosphoserine. Lysine 51 is subject to N6-acetyllysine. An N6-acetyllysine; alternate mark is found at lysine 92, lysine 98, lysine 113, lysine 129, and lysine 174. Lysine 92, lysine 98, lysine 113, lysine 129, and lysine 174 each carry N6-succinyllysine; alternate. Residues serine 207, lysine 232, and 285–289 (GSVPT) each bind NAD(+). Glutamate 313 acts as the Proton acceptor in catalysis. Position 317 is an N6-acetyllysine (lysine 317). Lysine 346 carries the N6-succinyllysine modification. Cysteine 347 acts as the Nucleophile in catalysis. Position 357 is an N6-acetyllysine; alternate (lysine 357). Lysine 357 bears the N6-succinyllysine; alternate mark. 2 positions are modified to N6-acetyllysine: lysine 364 and lysine 375. Lysine 394 is modified (N6-succinyllysine). NAD(+) is bound at residue glutamate 446. Lysine 461 is subject to N6-acetyllysine. N6-acetyllysine; alternate is present on lysine 508. At lysine 508 the chain carries N6-succinyllysine; alternate. Serine 512 is a binding site for substrate. Residues lysine 530 and lysine 551 each carry the N6-acetyllysine modification.

It belongs to the aldehyde dehydrogenase family. In terms of assembly, homodimer. In terms of processing, acetylation of Lys-98, Lys-113 and Lys-401 is observed in liver mitochondria from fasted mice but not from fed mice.

It localises to the mitochondrion matrix. It carries out the reaction L-glutamate 5-semialdehyde + NAD(+) + H2O = L-glutamate + NADH + 2 H(+). It participates in amino-acid degradation; L-proline degradation into L-glutamate; L-glutamate from L-proline: step 2/2. Its function is as follows. Irreversible conversion of delta-1-pyrroline-5-carboxylate (P5C), derived either from proline or ornithine, to glutamate. This is a necessary step in the pathway interconnecting the urea and tricarboxylic acid cycles. The preferred substrate is glutamic gamma-semialdehyde, other substrates include succinic, glutaric and adipic semialdehydes. The polypeptide is Delta-1-pyrroline-5-carboxylate dehydrogenase, mitochondrial (Aldh4a1) (Mus musculus (Mouse)).